We begin with the raw amino-acid sequence, 108 residues long: Glutaredoxin-1 (108 aa).

Residues 3-106 (EEFVQQRLAN…DILLSIGVLR (104 aa)) form the Glutaredoxin domain. A disulfide bridge connects residues C23 and C26.

It belongs to the glutaredoxin family.

It is found in the virion. Its function is as follows. Displays thioltransferase and dehydroascorbate reductase activities. The protein is Glutaredoxin-1 (OPG075) of Cynomys gunnisoni (Gunnison's prairie dog).